The sequence spans 347 residues: UDP-3-O-acylglucosamine N-acyltransferase (347 aa).

Histidine 248 (proton acceptor) is an active-site residue.

The protein belongs to the transferase hexapeptide repeat family. LpxD subfamily. As to quaternary structure, homotrimer.

The catalysed reaction is a UDP-3-O-[(3R)-3-hydroxyacyl]-alpha-D-glucosamine + a (3R)-hydroxyacyl-[ACP] = a UDP-2-N,3-O-bis[(3R)-3-hydroxyacyl]-alpha-D-glucosamine + holo-[ACP] + H(+). The protein operates within bacterial outer membrane biogenesis; LPS lipid A biosynthesis. Its function is as follows. Catalyzes the N-acylation of UDP-3-O-acylglucosamine using 3-hydroxyacyl-ACP as the acyl donor. Is involved in the biosynthesis of lipid A, a phosphorylated glycolipid that anchors the lipopolysaccharide to the outer membrane of the cell. In Parasynechococcus marenigrum (strain WH8102), this protein is UDP-3-O-acylglucosamine N-acyltransferase.